Here is a 166-residue protein sequence, read N- to C-terminus: Cofilin-2 (166 aa).

Residue Ala-2 is modified to N-acetylalanine. Position 3 is a phosphoserine (Ser-3). One can recognise an ADF-H domain in the interval 4 to 153 (GVTVNDEVIK…KDRSTLGEKL (150 aa)). The residue at position 6 (Thr-6) is a Phosphothreonine. The Nuclear localization signal motif lies at 30–34 (KKRKK).

This sequence belongs to the actin-binding proteins ADF family. The phosphorylation of Ser-24 may prevent recognition of the nuclear localization signal.

Its subcellular location is the nucleus matrix. The protein resides in the cytoplasm. It is found in the cytoskeleton. Functionally, controls reversibly actin polymerization and depolymerization in a pH-sensitive manner. It has the ability to bind G- and F-actin in a 1:1 ratio of cofilin to actin. It is the major component of intranuclear and cytoplasmic actin rods. This Bos taurus (Bovine) protein is Cofilin-2 (CFL2).